The chain runs to 516 residues: L-amino acid oxidase bordonein-L (516 aa).

Positions Met-1–Cys-18 are cleaved as a signal peptide. Cys-28 and Cys-189 are oxidised to a cystine. Residues Met-61 to Ala-62, Glu-81 to Ala-82, Arg-89, and Gly-103 to Arg-106 each bind FAD. Residues Arg-106 and His-239 each contribute to the substrate site. Val-279 is a binding site for FAD. An intrachain disulfide couples Cys-349 to Cys-430. An N-linked (GlcNAc...) asparagine glycan is attached at Asn-379. Residue Tyr-390 participates in substrate binding. FAD contacts are provided by residues Glu-475 and Gly-482–Thr-487. Substrate is bound at residue Gly-482 to Trp-483.

Homodimer; non-covalently linked. FAD is required as a cofactor. In terms of processing, N-glycosylated. N-glycan probably consists of the disaccharide N-acetylglucosamine-fucose (HexNAc-Fuc). As to expression, expressed by the venom gland.

It is found in the secreted. The enzyme catalyses an L-alpha-amino acid + O2 + H2O = a 2-oxocarboxylate + H2O2 + NH4(+). The catalysed reaction is L-leucine + O2 + H2O = 4-methyl-2-oxopentanoate + H2O2 + NH4(+). It carries out the reaction L-phenylalanine + O2 + H2O = 3-phenylpyruvate + H2O2 + NH4(+). It catalyses the reaction L-tryptophan + O2 + H2O = indole-3-pyruvate + H2O2 + NH4(+). The enzyme catalyses L-methionine + O2 + H2O = 4-methylsulfanyl-2-oxobutanoate + H2O2 + NH4(+). The catalysed reaction is L-isoleucine + O2 + H2O = (S)-3-methyl-2-oxopentanoate + H2O2 + NH4(+). It carries out the reaction L-arginine + O2 + H2O = 5-guanidino-2-oxopentanoate + H2O2 + NH4(+). It catalyses the reaction L-histidine + O2 + H2O = 3-(imidazol-5-yl)pyruvate + H2O2 + NH4(+). Its function is as follows. Catalyzes an oxidative deamination of predominantly hydrophobic and aromatic L-amino acids, thus producing hydrogen peroxide that may contribute to the diverse toxic effects of this enzyme. Is highly active on L-Met, L-Leu, L-Trp, and L-Phe, moderately active on L-Ile, L-His, and L-Arg, and weakly or not active on L-Gln, L-Val, L-Asn, L-Ala, L-Lys, L-Ser, L-Thr, L-Pro, L-Asp, L-Gly, L-Tyr, L-Cys and L-Glu. This enzyme exhibits diverse biological activities, such as hemorrhage, hemolysis, edema, apoptosis of vascular endothelial cells or tumor cell lines, antibacterial and antiparasitic activities, as well as regulation of platelet aggregation. Its effect on platelets is controversial, since it either induces aggregation or inhibits agonist-induced aggregation. These different effects are probably due to different experimental conditions. In vitro, the enzyme exhibits cytotoxicity against fibroblast cell line and kills Leishmania amazonensis promastigotes, intensified by substrate addition. This Crotalus durissus terrificus (South American rattlesnake) protein is L-amino acid oxidase bordonein-L.